The primary structure comprises 139 residues: Endocuticle structural glycoprotein SgAbd-8 (139 aa).

Gln1 is modified (pyrrolidone carboxylic acid). Thr14 carries an O-linked (HexNAc...) threonine glycan. The O-linked (HexNAc...) serine glycan is linked to Ser15. One can recognise a Chitin-binding type R&amp;R domain in the interval 29–99; the sequence is DGSYAWSYET…PEGAHLPTPP (71 aa). Thr97 carries an O-linked (HexNAc...) threonine glycan. The interval 111–139 is disordered; it reads FIASQPQQPGNNGGGQFPRPQPFPRPGAF. Positions 129–139 are enriched in pro residues; it reads RPQPFPRPGAF.

Its function is as follows. Component of the abdominal endocuticle. The protein is Endocuticle structural glycoprotein SgAbd-8 of Schistocerca gregaria (Desert locust).